Here is a 269-residue protein sequence, read N- to C-terminus: MDRPVTKRITVLTLQNIYREKGKIAALTCYDATFAAVLENAGVDILLVGDSLGNVIQGQASTLPVTLDEMIYHVCCVERGTHSVFILADMPFGTFQVSPQEAFRNAVRLMAAGAQMVKVEGGRHMAETIEFLTCRGIPVCAHIGLIPQSVHQLGGYKIQGKTPDGARQLLEDALLLQKAGAAMLVMELIPAALGEEITRSLSIPTIGIGAGAVCSGQVLVLHDMLGISSGTLPRFVKNFMAGADSIQVAVRNYVKAVKTGEFPAHEHMF.

Mg(2+) is bound by residues D50 and D89. 3-methyl-2-oxobutanoate-binding positions include 50–51 (DS), D89, and K118. Residue E120 coordinates Mg(2+). The active-site Proton acceptor is E187.

The protein belongs to the PanB family. Homodecamer; pentamer of dimers. It depends on Mg(2+) as a cofactor.

It is found in the cytoplasm. It catalyses the reaction 3-methyl-2-oxobutanoate + (6R)-5,10-methylene-5,6,7,8-tetrahydrofolate + H2O = 2-dehydropantoate + (6S)-5,6,7,8-tetrahydrofolate. The protein operates within cofactor biosynthesis; (R)-pantothenate biosynthesis; (R)-pantoate from 3-methyl-2-oxobutanoate: step 1/2. Its function is as follows. Catalyzes the reversible reaction in which hydroxymethyl group from 5,10-methylenetetrahydrofolate is transferred onto alpha-ketoisovalerate to form ketopantoate. In Nitrosomonas eutropha (strain DSM 101675 / C91 / Nm57), this protein is 3-methyl-2-oxobutanoate hydroxymethyltransferase.